Consider the following 488-residue polypeptide: Regulatory protein ViaA (488 aa).

This sequence belongs to the ViaA family. In terms of assembly, homodimer. Interacts with RavA.

The protein resides in the cytoplasm. In terms of biological role, component of the RavA-ViaA chaperone complex, which may act on the membrane to optimize the function of some of the respiratory chains. ViaA stimulates the ATPase activity of RavA. The protein is Regulatory protein ViaA of Yersinia enterocolitica serotype O:8 / biotype 1B (strain NCTC 13174 / 8081).